The chain runs to 349 residues: Phenylalanine--tRNA ligase alpha subunit (349 aa).

Glutamate 258 provides a ligand contact to Mg(2+).

Belongs to the class-II aminoacyl-tRNA synthetase family. Phe-tRNA synthetase alpha subunit type 1 subfamily. In terms of assembly, tetramer of two alpha and two beta subunits. Mg(2+) serves as cofactor.

It is found in the cytoplasm. It carries out the reaction tRNA(Phe) + L-phenylalanine + ATP = L-phenylalanyl-tRNA(Phe) + AMP + diphosphate + H(+). The polypeptide is Phenylalanine--tRNA ligase alpha subunit (Rickettsia rickettsii (strain Sheila Smith)).